We begin with the raw amino-acid sequence, 157 residues long: MSRKGNTPQRSVLPDPKHGSETIARFINMVMQSGKKSVAEKIVYGAMDVITEKNSSANAIELVQKALDNVAPAVEVKSRRVGGATYQVPVEVRSSRKMALAMRWLIDSARKRGENTMPKKLAAELIDASENRGGAIKKREETHRMAEANKAFAHYRW.

It belongs to the universal ribosomal protein uS7 family. In terms of assembly, part of the 30S ribosomal subunit. Contacts proteins S9 and S11.

In terms of biological role, one of the primary rRNA binding proteins, it binds directly to 16S rRNA where it nucleates assembly of the head domain of the 30S subunit. Is located at the subunit interface close to the decoding center, probably blocks exit of the E-site tRNA. This Stenotrophomonas maltophilia (strain R551-3) protein is Small ribosomal subunit protein uS7.